We begin with the raw amino-acid sequence, 332 residues long: 5-dehydro-2-deoxygluconokinase 1 (332 aa).

It belongs to the carbohydrate kinase PfkB family.

It carries out the reaction 5-dehydro-2-deoxy-D-gluconate + ATP = 6-phospho-5-dehydro-2-deoxy-D-gluconate + ADP + H(+). Its pathway is polyol metabolism; myo-inositol degradation into acetyl-CoA; acetyl-CoA from myo-inositol: step 5/7. Functionally, catalyzes the phosphorylation of 5-dehydro-2-deoxy-D-gluconate (2-deoxy-5-keto-D-gluconate or DKG) to 6-phospho-5-dehydro-2-deoxy-D-gluconate (DKGP). This chain is 5-dehydro-2-deoxygluconokinase 1, found in Bacillus cereus (strain ZK / E33L).